We begin with the raw amino-acid sequence, 381 residues long: Succinyl-diaminopimelate desuccinylase 1 (381 aa).

Residue H70 coordinates Zn(2+). The active site involves D72. Residue D103 coordinates Zn(2+). The Proton acceptor role is filled by E136. Zn(2+) contacts are provided by E137, E165, and H354.

This sequence belongs to the peptidase M20A family. DapE subfamily. Homodimer. Requires Zn(2+) as cofactor. Co(2+) serves as cofactor.

The catalysed reaction is N-succinyl-(2S,6S)-2,6-diaminopimelate + H2O = (2S,6S)-2,6-diaminopimelate + succinate. Its pathway is amino-acid biosynthesis; L-lysine biosynthesis via DAP pathway; LL-2,6-diaminopimelate from (S)-tetrahydrodipicolinate (succinylase route): step 3/3. Functionally, catalyzes the hydrolysis of N-succinyl-L,L-diaminopimelic acid (SDAP), forming succinate and LL-2,6-diaminopimelate (DAP), an intermediate involved in the bacterial biosynthesis of lysine and meso-diaminopimelic acid, an essential component of bacterial cell walls. This Ruegeria sp. (strain TM1040) (Silicibacter sp.) protein is Succinyl-diaminopimelate desuccinylase 1.